The following is a 128-amino-acid chain: Protein C10 (128 aa).

The protein belongs to the UPF0456 family.

It localises to the cytoplasm. The chain is Protein C10 from Xenopus laevis (African clawed frog).